The chain runs to 229 residues: MTEVYDLEITTNATDFPMEKKYPAGMSLNDLKKKLELVVGTTVDSMRIQLFDGDDQLKGELTDGAKSLKDLGVRDGYRIHAVDVTGGNEDFKDESMVEKYEMSDDTYGKRTDSVRAWKKKMQEEQGSAAPMENESDKLNEEAAKNIMVGNRCEVTVGAQMARRGEVAYVGATKFKEGVWVGVKYDEPVGKNDGSVAGVRYFDCDPKYGGFVRPVDVKVGDFPELSIDEI.

Residues Gly-170–Arg-212 enclose the CAP-Gly domain.

Belongs to the TBCB family. Supercomplex made of cofactors A to E. Cofactors A and D function by capturing and stabilizing tubulin in a quasi-native conformation. Cofactor E binds to the cofactor D-tubulin complex; interaction with cofactor C then causes the release of tubulin polypeptides that are committed to the native state.

The protein resides in the cytoplasm. Its subcellular location is the cytoskeleton. Binds to alpha-tubulin folding intermediates after their interaction with cytosolic chaperonin in the pathway leading from newly synthesized tubulin to properly folded heterodimer. The chain is Tubulin-specific chaperone B from Caenorhabditis elegans.